The primary structure comprises 173 residues: uncharacterized protein (173 aa).

3 consecutive transmembrane segments (helical) span residues 24 to 44 (VAFIAIPISQFCFFNLLWLFF), 82 to 102 (YILFNILIFATNILVICSYFI), and 135 to 155 (LIKRFLAYITFPIGIFFILFS).

It is found in the cell membrane. This is an uncharacterized protein from Rickettsia prowazekii (strain Madrid E).